A 98-amino-acid polypeptide reads, in one-letter code: NADH-ubiquinone oxidoreductase chain 4L (98 aa).

A run of 3 helical transmembrane segments spans residues 1–21 (MSIT…GLLL), 29–49 (SLLC…MIIL), and 61–81 (IILL…LVMV).

Belongs to the complex I subunit 4L family. Core subunit of respiratory chain NADH dehydrogenase (Complex I) which is composed of 45 different subunits.

It is found in the mitochondrion inner membrane. It carries out the reaction a ubiquinone + NADH + 5 H(+)(in) = a ubiquinol + NAD(+) + 4 H(+)(out). Functionally, core subunit of the mitochondrial membrane respiratory chain NADH dehydrogenase (Complex I) which catalyzes electron transfer from NADH through the respiratory chain, using ubiquinone as an electron acceptor. Part of the enzyme membrane arm which is embedded in the lipid bilayer and involved in proton translocation. The chain is NADH-ubiquinone oxidoreductase chain 4L (MT-ND4L) from Platyrrhinus dorsalis (Thomas's broad-nosed bat).